We begin with the raw amino-acid sequence, 395 residues long: Flagellin B (395 aa).

This sequence belongs to the bacterial flagellin family.

The protein resides in the secreted. The protein localises to the bacterial flagellum. Flagellin is the subunit protein which polymerizes to form the filaments of bacterial flagella. The sequence is that of Flagellin B (flaB) from Rhizobium meliloti (Ensifer meliloti).